The chain runs to 100 residues: NADH-quinone oxidoreductase subunit K (100 aa).

3 helical membrane-spanning segments follow: residues 3 to 23, 29 to 49, and 63 to 83; these read PTAY…IGVL, IMIF…LVAF, and FIVM…IVAI.

This sequence belongs to the complex I subunit 4L family. As to quaternary structure, NDH-1 is composed of 15 different subunits. Subunits NuoA, H, J, K, L, M, N constitute the membrane sector of the complex.

It is found in the cell membrane. The enzyme catalyses a quinone + NADH + 5 H(+)(in) = a quinol + NAD(+) + 4 H(+)(out). NDH-1 shuttles electrons from NADH, via FMN and iron-sulfur (Fe-S) centers, to quinones in the respiratory chain. The immediate electron acceptor for the enzyme in this species is believed to be a menaquinone. Couples the redox reaction to proton translocation (for every two electrons transferred, four hydrogen ions are translocated across the cytoplasmic membrane), and thus conserves the redox energy in a proton gradient. This Deinococcus geothermalis (strain DSM 11300 / CIP 105573 / AG-3a) protein is NADH-quinone oxidoreductase subunit K.